The primary structure comprises 449 residues: L-seryl-tRNA(Sec) selenium transferase (449 aa).

Position 286 is an N6-(pyridoxal phosphate)lysine (lysine 286).

This sequence belongs to the SelA family. It depends on pyridoxal 5'-phosphate as a cofactor.

The protein resides in the cytoplasm. The catalysed reaction is L-seryl-tRNA(Sec) + selenophosphate + H(+) = L-selenocysteinyl-tRNA(Sec) + phosphate. The protein operates within aminoacyl-tRNA biosynthesis; selenocysteinyl-tRNA(Sec) biosynthesis; selenocysteinyl-tRNA(Sec) from L-seryl-tRNA(Sec) (bacterial route): step 1/1. Its function is as follows. Converts seryl-tRNA(Sec) to selenocysteinyl-tRNA(Sec) required for selenoprotein biosynthesis. In Sulfurimonas denitrificans (strain ATCC 33889 / DSM 1251) (Thiomicrospira denitrificans (strain ATCC 33889 / DSM 1251)), this protein is L-seryl-tRNA(Sec) selenium transferase.